The chain runs to 25 residues: U11-ctenitoxin-Co1b (25 aa).

2 disulfides stabilise this stretch: Cys4–Cys18 and Cys11–Cys22.

As to quaternary structure, monomer. In terms of tissue distribution, expressed by the venom gland.

It is found in the secreted. Neurotoxin. The polypeptide is U11-ctenitoxin-Co1b (Ctenus ornatus (Brazilian spider)).